Here is a 480-residue protein sequence, read N- to C-terminus: O-acyltransferase ausP (480 aa).

Catalysis depends on proton acceptor residues His180 and Asp412.

Belongs to the plant acyltransferase family. In terms of assembly, monomer.

The protein operates within secondary metabolite biosynthesis; terpenoid biosynthesis. O-acyltransferase; part of the gene cluster that mediates the biosynthesis of calidodehydroaustin, a fungal meroterpenoid. The first step of the pathway is the synthesis of 3,5-dimethylorsellinic acid by the polyketide synthase ausA. 3,5-dimethylorsellinic acid is then prenylated by the polyprenyl transferase ausN. Further epoxidation by the FAD-dependent monooxygenase ausM and cyclization by the probable terpene cyclase ausL lead to the formation of protoaustinoid A. Protoaustinoid A is then oxidized to spiro-lactone preaustinoid A3 by the combined action of the FAD-binding monooxygenases ausB and ausC, and the dioxygenase ausE. Acid-catalyzed keto-rearrangement and ring contraction of the tetraketide portion of preaustinoid A3 by ausJ lead to the formation of preaustinoid A4. The aldo-keto reductase ausK, with the help of ausH, is involved in the next step by transforming preaustinoid A4 into isoaustinone which is in turn hydroxylated by the P450 monooxygenase ausI to form austinolide. The cytochrome P450 monooxygenase ausG modifies austinolide to austinol. Austinol is further acetylated to austin by the O-acetyltransferase ausP, which spontaneously changes to dehydroaustin. The cytochrome P450 monooxygenase ausR then converts dehydroaustin is into 7-dehydrodehydroaustin. The hydroxylation catalyzed by ausR permits the O-acetyltransferase ausQ to add an additional acetyl group to the molecule, leading to the formation of acetoxydehydroaustin. The short chain dehydrogenase ausT catalyzes the reduction of the double bond present between carbon atoms 1 and 2 to convert 7-dehydrodehydroaustin into 1,2-dihydro-7-hydroxydehydroaustin. AusQ catalyzes not only an acetylation reaction but also the addition of the PKS ausV diketide product to 1,2-dihydro-7-hydroxydehydroaustin, forming precalidodehydroaustin. Finally, the iron/alpha-ketoglutarate-dependent dioxygenase converts precalidodehydroaustin into calidodehydroaustin. The chain is O-acyltransferase ausP from Aspergillus calidoustus.